We begin with the raw amino-acid sequence, 214 residues long: Rhodanese-like domain-containing protein 10 (214 aa).

The Rhodanese domain occupies 58-182 (ASEGYILLDV…VSEGDFPEIE (125 aa)). Cys142 acts as the Cysteine persulfide intermediate in catalysis. Residues 190–206 (ATIGGVSFYLLKLLVLL) form a helical membrane-spanning segment.

It is found in the membrane. The chain is Rhodanese-like domain-containing protein 10 (STR10) from Arabidopsis thaliana (Mouse-ear cress).